The sequence spans 225 residues: Ferric nitrobindin-like protein (225 aa).

Positions 78-84 (GVWRGTG) match the GXWXGXG motif.

Belongs to the nitrobindin family.

This is Ferric nitrobindin-like protein from Corynebacterium diphtheriae (strain ATCC 700971 / NCTC 13129 / Biotype gravis).